The primary structure comprises 342 residues: MSINIEQAIIHEISQDSQGQLRCRLRPQPLLNSQAVEMMLEELHQTYTSKSGKGFGYFGIHGDDGEANPAFSNALQEYRAGDLGFVEFTGQASKLLQEELAKYDFSQGGFLLMSCYTSMASDFLFVALLSAKSSMTVLDDMELSQNNHLDLSNIQLAARIDLTEWQADKDSRKYISFIRGRAGRKVADFFLDFMGCVEGVNTKAQNKTLMNAVEDFVASSDLTKEERQQCRNKVFEYCSERFDEGADIEIKDLADELADQGMESFYDFARGGSYELDEEFPADKSTLRQLKKFSGTGGGVTISFDGGHLGQRVIYDPISDTLLIKGVPANLKDQLDRRLKGE.

This sequence belongs to the YejK family.

The protein localises to the cytoplasm. Its subcellular location is the nucleoid. This is Nucleoid-associated protein Shewmr4_2217 from Shewanella sp. (strain MR-4).